We begin with the raw amino-acid sequence, 289 residues long: Glycine--tRNA ligase alpha subunit (289 aa).

Belongs to the class-II aminoacyl-tRNA synthetase family. As to quaternary structure, tetramer of two alpha and two beta subunits.

It is found in the cytoplasm. The enzyme catalyses tRNA(Gly) + glycine + ATP = glycyl-tRNA(Gly) + AMP + diphosphate. In Rickettsia bellii (strain OSU 85-389), this protein is Glycine--tRNA ligase alpha subunit.